A 389-amino-acid polypeptide reads, in one-letter code: bZIP transcription factor 68 (389 aa).

The span at 1 to 16 (MGSSEMEKSGKEKEPK) shows a compositional bias: basic and acidic residues. Disordered regions lie at residues 1–42 (MGSS…VSAG), 124–154 (MAEA…KRSK), 170–236 (AGKN…NLPV), 285–318 (QPWL…RKQA), and 356–389 (SSLK…QDVA). The span at 19 to 32 (PPSTSSSAPATVVS) shows a compositional bias: low complexity. Residues 137–149 (GDGKPSDGKEKLP) show a composition bias toward basic and acidic residues. Lys154 participates in a covalent cross-link: Glycyl lysine isopeptide (Lys-Gly) (interchain with G-Cter in ubiquitin). Over residues 170–205 (AGKNSGASANGACSKSAESGSDGSSDGSDANSQNDS) the composition is skewed to low complexity. 2 stretches are compositionally biased toward basic and acidic residues: residues 206-215 (GSRHNGKDGE) and 304-318 (SNRE…RKQA). The bZIP domain maps to 295 to 358 (EIKRQRRKQS…EELLAENSSL (64 aa)). A basic motif region spans residues 297-316 (KRQRRKQSNRESARRSRLRK). Positions 323 to 358 (LAQRAEVLNGENSSLRAEINKLKSQYEELLAENSSL) are leucine-zipper. A compositionally biased stretch (polar residues) spans 356–366 (SSLKNKFSSAP). Over residues 372 to 389 (DLDKNEQEPQRSTRQDVA) the composition is skewed to basic and acidic residues.

The protein belongs to the bZIP family. Monomer, homodimer and heterodimers with GBF1/BZIP41, GBF2/BZIP54 and GBF3/BZIP55. Heterodimers with BZIP16. Interacts with GIP1.

It localises to the nucleus. Transcriptional activator that binds to the G-box motif (5'-CACGTG-3') and other cis-acting elements with 5'-ACGT-3' core, such as Hex, C-box and as-1 motifs. Possesses high binding affinity to G-box, much lower affinity to Hex and C-box, and little affinity to as-1 element. G-box and G-box-like motifs are cis-acting elements defined in promoters of certain plant genes which are regulated by such diverse stimuli as light-induction or hormone control. Binds to the G-box motif 5'-CACGTG-3' of LHCB2.4 (At3g27690) promoter. May act as transcriptional activator in light-regulated expression of LHCB2.4. Probably binds DNA as monomer. DNA-binding activity is redox-dependent. In Arabidopsis thaliana (Mouse-ear cress), this protein is bZIP transcription factor 68.